Here is an 89-residue protein sequence, read N- to C-terminus: Peroxidase (89 aa).

Histidine 52 is a binding site for heme. Threonine 53 and aspartate 68 together coordinate Ca(2+).

Requires heme b as cofactor. It depends on Ca(2+) as a cofactor.

It is found in the secreted. It carries out the reaction 2 a phenolic donor + H2O2 = 2 a phenolic radical donor + 2 H2O. In terms of biological role, removal of H(2)O(2), oxidation of toxic reductants, biosynthesis and degradation of lignin, suberization, auxin catabolism, response to environmental stresses such as wounding, pathogen attack and oxidative stress. These functions might be dependent on each isozyme/isoform in each plant tissue. Active against p-coumaryl alcohol, coniferyl alcohol and coniferyl aldehyde. The sequence is that of Peroxidase from Ginkgo biloba (Ginkgo).